Here is a 552-residue protein sequence, read N- to C-terminus: MAAKEVKFGDSARKKMLVGVNVLADAVKATLGPKGRNVVLEKSFGAPTITKDGVSVAKEIELKDRFENMGAQLVKDVASKANDEAGDGTTTATVLAQAIVNEGLKAVAAGMNPMDLKRGIDKATIAIVAELKNLAKPCTDSKAIAQVGTISANSDSSIGDIIAEAMERVGKEGVITVEEGSGLENELSVVEGMQFDRGYLSPYFINKPDTMVAELDSPLLLLVDKKISNIRELLPVLEAVAKAGRPLLIVAEDVEGEALATLVVNNMRGIVKVAAVKAPGFGDRRKAMLQDIAILTGGTVISEEVGLSLETATLEHLGNAKRVVLNKENTTIIDGAGQQADIEARVAQIRKQVEDTTSDYDKEKLQERLAKLAGGVAVIKVGAGTEVEMKEKKARVEDALHATRAAVEEGVVPGGGVAWVRALQAISELKGENEDQNVGIALLRRAVEAPLRQIVTNAGGEPSVVVDKVKQGEGNYGFNAASDTYGDMIEMGILDPAKVTRSALQAAASIGSLMITTEAMIAEVAEDKAAGGMPDMGGMGGMGGMGGMGGMM.

ATP is bound by residues 30–33, Lys51, 87–91, Gly415, 479–481, and Asp495; these read TLGP, DGTTT, and NAA.

It belongs to the chaperonin (HSP60) family. As to quaternary structure, forms a cylinder of 14 subunits composed of two heptameric rings stacked back-to-back. Interacts with the co-chaperonin GroES.

The protein resides in the cytoplasm. The enzyme catalyses ATP + H2O + a folded polypeptide = ADP + phosphate + an unfolded polypeptide.. Its function is as follows. Together with its co-chaperonin GroES, plays an essential role in assisting protein folding. The GroEL-GroES system forms a nano-cage that allows encapsulation of the non-native substrate proteins and provides a physical environment optimized to promote and accelerate protein folding. The protein is Chaperonin GroEL of Stutzerimonas stutzeri (Pseudomonas stutzeri).